Consider the following 89-residue polypeptide: Small ribosomal subunit protein uS15 (89 aa).

Belongs to the universal ribosomal protein uS15 family. Part of the 30S ribosomal subunit. Forms a bridge to the 50S subunit in the 70S ribosome, contacting the 23S rRNA.

Functionally, one of the primary rRNA binding proteins, it binds directly to 16S rRNA where it helps nucleate assembly of the platform of the 30S subunit by binding and bridging several RNA helices of the 16S rRNA. Its function is as follows. Forms an intersubunit bridge (bridge B4) with the 23S rRNA of the 50S subunit in the ribosome. In Vibrio vulnificus (strain YJ016), this protein is Small ribosomal subunit protein uS15.